The primary structure comprises 130 residues: uncharacterized protein (130 aa).

The tract at residues 23 to 130 is disordered; that stretch reads SHLRLLPTAN…GAHQLSSPSS (108 aa). Positions 30–45 are enriched in polar residues; that stretch reads TANSPSGSNQPTNPNR.

This is an uncharacterized protein from Homo sapiens (Human).